Here is a 244-residue protein sequence, read N- to C-terminus: Krueppel-like factor 9 (244 aa).

Disordered regions lie at residues 26-51 (EHGGAPEAERLRLPEREVTKEHGDPG) and 79-143 (PSVC…EKRH). The span at 32–51 (EAERLRLPEREVTKEHGDPG) shows a compositional bias: basic and acidic residues. Ser122 carries the phosphoserine modification. A compositionally biased stretch (basic residues) spans 134–143 (KGKHASEKRH). 3 C2H2-type zinc fingers span residues 143 to 167 (HKCPYSGCGKVYGKSSHLKAHYRVH), 173 to 197 (FPCTWPDCLKKFSRSDELTRHYRTH), and 203 to 225 (FRCPLCEKRFMRSDHLTKHARRH).

The protein belongs to the Sp1 C2H2-type zinc-finger protein family. Interacts with ZZEF1.

Its subcellular location is the nucleus. In terms of biological role, transcription factor that binds to GC box promoter elements. Selectively activates mRNA synthesis from genes containing tandem repeats of GC boxes but represses genes with a single GC box. Acts as an epidermal circadian transcription factor regulating keratinocyte proliferation. This chain is Krueppel-like factor 9 (Klf9), found in Mus musculus (Mouse).